A 757-amino-acid polypeptide reads, in one-letter code: Glutathione biosynthesis bifunctional protein GshAB (757 aa).

Positions 1-337 (MKIQHIIHEN…LGKARLAEVA (337 aa)) are glutamate--cysteine ligase. An ATP-grasp domain is found at 494–753 (KKVLQKAGFN…LTQNVIKMLF (260 aa)). ATP is bound at residue 521–580 (ALFENRAVVIKPKSTNYGLGITIFQQGVQNREDFAKALEIAFREDKEVMVEDYLVGTEYR). 3 residues coordinate Mg(2+): D702, E723, and N725. Residues D702, E723, and N725 each contribute to the Mn(2+) site.

The protein in the N-terminal section; belongs to the glutamate--cysteine ligase type 1 family. Type 2 subfamily. As to quaternary structure, monomer. Requires Mg(2+) as cofactor. It depends on Mn(2+) as a cofactor.

It carries out the reaction L-cysteine + L-glutamate + ATP = gamma-L-glutamyl-L-cysteine + ADP + phosphate + H(+). It catalyses the reaction gamma-L-glutamyl-L-cysteine + glycine + ATP = glutathione + ADP + phosphate + H(+). Its pathway is sulfur metabolism; glutathione biosynthesis; glutathione from L-cysteine and L-glutamate: step 1/2. It functions in the pathway sulfur metabolism; glutathione biosynthesis; glutathione from L-cysteine and L-glutamate: step 2/2. Synthesizes glutathione from L-glutamate and L-cysteine via gamma-L-glutamyl-L-cysteine. This Pasteurella multocida (strain Pm70) protein is Glutathione biosynthesis bifunctional protein GshAB.